The following is a 288-amino-acid chain: Homoserine kinase (288 aa).

79–89 (PPARGLGSSSA) contributes to the ATP binding site.

This sequence belongs to the GHMP kinase family. Homoserine kinase subfamily.

It is found in the cytoplasm. The enzyme catalyses L-homoserine + ATP = O-phospho-L-homoserine + ADP + H(+). Its pathway is amino-acid biosynthesis; L-threonine biosynthesis; L-threonine from L-aspartate: step 4/5. Functionally, catalyzes the ATP-dependent phosphorylation of L-homoserine to L-homoserine phosphate. The chain is Homoserine kinase from Listeria monocytogenes serotype 4b (strain F2365).